The following is a 180-amino-acid chain: MSRLKKLYTEEIRKTLQDKFQYENVMQIPVLKKIVISMGLAEAAKDKNLFQAHLEELAVISSQKPLVTRARNSIAGFKLREGQGIGAKVTLRGIRMYDFMDRFCNIVSPRIRDFRGFSCKGDGRGCYSFGLDDQQIFPEVDLDRVKRSQGMNITWVTTAQTDAECLTLLECMGLRFKKAQ.

This sequence belongs to the universal ribosomal protein uL5 family. Part of the 50S ribosomal subunit; part of the 5S rRNA/L5/L18/L25 subcomplex. Contacts the 5S rRNA and the P site tRNA. Forms a bridge to the 30S subunit in the 70S ribosome.

This is one of the proteins that bind and probably mediate the attachment of the 5S RNA into the large ribosomal subunit, where it forms part of the central protuberance. In the 70S ribosome it contacts protein S13 of the 30S subunit (bridge B1b), connecting the 2 subunits; this bridge is implicated in subunit movement. Contacts the P site tRNA; the 5S rRNA and some of its associated proteins might help stabilize positioning of ribosome-bound tRNAs. In Chlamydia trachomatis serovar A (strain ATCC VR-571B / DSM 19440 / HAR-13), this protein is Large ribosomal subunit protein uL5.